The chain runs to 1003 residues: cGMP-dependent protein kinase (1003 aa).

The tract at residues Met-1–Gln-141 is disordered. Residue Gly-2 is the site of N-myristoyl glycine attachment. A lipid anchor (S-palmitoyl cysteine) is attached at Cys-4. The segment covering Glu-69–Gln-85 has biased composition (low complexity). Composition is skewed to basic and acidic residues over residues Gln-86–Pro-109 and Glu-127–Gln-141. 4 cNMP-binding domain regions span residues Val-173–Ser-289, Phe-292–Gly-391, Val-411–Gly-548, and Ile-570–Val-669. Positions 237, 238, 247, and 248 each coordinate 3',5'-cyclic GMP. Positions 625, 634, 635, 637, 644, and 645 each coordinate 3',5'-cyclic GMP. The Protein kinase domain occupies Leu-693–Phe-950. Residues Val-699 to Val-707 and Lys-722 each bind ATP. Asp-816 serves as the catalytic Proton acceptor. Positions Ser-951 to Phe-1003 constitute an AGC-kinase C-terminal domain.

It belongs to the protein kinase superfamily. AGC Ser/Thr protein kinase family. cGMP subfamily. In terms of assembly, monomer. The cofactor is Mg(2+).

The protein localises to the cell membrane. It localises to the cytoplasm. The catalysed reaction is L-seryl-[protein] + ATP = O-phospho-L-seryl-[protein] + ADP + H(+). The enzyme catalyses L-threonyl-[protein] + ATP = O-phospho-L-threonyl-[protein] + ADP + H(+). Activated by cGMP. The cGMP-binding domains acts cooperatively to activate PKG. Inhibited by the antiparasitic small molecule 4-[2-(4-fluorophenyl)-5-(1-methylpiperidine-4-yl)-1Hpyrrol- 3-yl]pyridine (compound 1). In terms of biological role, serine/threonine protein kinase which acts as a downstream effector of the second messenger cGMP. The polypeptide is cGMP-dependent protein kinase (Eimeria tenella (Coccidian parasite)).